We begin with the raw amino-acid sequence, 262 residues long: Type II pantothenate kinase (262 aa).

7–14 serves as a coordination point for ATP; the sequence is DAGGSLVK. Glu71 serves as the catalytic Proton acceptor. ATP is bound by residues Thr101, 119-123, and Tyr135; that span reads GGLLT.

This sequence belongs to the type II pantothenate kinase family. In terms of assembly, homodimer.

It localises to the cytoplasm. It catalyses the reaction (R)-pantothenate + ATP = (R)-4'-phosphopantothenate + ADP + H(+). It functions in the pathway cofactor biosynthesis; coenzyme A biosynthesis; CoA from (R)-pantothenate: step 1/5. Functionally, catalyzes the phosphorylation of pantothenate (Pan), the first step in CoA biosynthesis. The polypeptide is Type II pantothenate kinase (Oceanobacillus iheyensis (strain DSM 14371 / CIP 107618 / JCM 11309 / KCTC 3954 / HTE831)).